A 149-amino-acid chain; its full sequence is Ribonuclease H (149 aa).

Residues 4-145 (QRGVVEAFTD…ADALANQGID (142 aa)) form the RNase H type-1 domain. Residues Asp13, Glu51, Asp73, and Asp137 each coordinate Mg(2+).

It belongs to the RNase H family. In terms of assembly, monomer. Mg(2+) is required as a cofactor.

The protein resides in the cytoplasm. The enzyme catalyses Endonucleolytic cleavage to 5'-phosphomonoester.. Functionally, endonuclease that specifically degrades the RNA of RNA-DNA hybrids. In Halorhodospira halophila (strain DSM 244 / SL1) (Ectothiorhodospira halophila (strain DSM 244 / SL1)), this protein is Ribonuclease H.